Consider the following 31-residue polypeptide: Dermaseptin-7.1TR (31 aa).

Residue Gln31 is modified to Glutamine amide.

In terms of tissue distribution, expressed by the skin glands.

The protein resides in the secreted. Its function is as follows. Has antimicrobial activity. This is Dermaseptin-7.1TR from Phyllomedusa trinitatis (Trinidad leaf frog).